We begin with the raw amino-acid sequence, 406 residues long: MSHFGDHVGIDPAIMKQYSEHHNGSHDNDDKDKEDKEKQNTEAVAAAAVQLDASLLASGILDDFEKAKKEEEEANGNNNASNDQQNASDRHVGDMLEQHSQQHQQSQEHDTSYINTYIEDKVPLTSVLIPGDRRVSDREASDRIAATTRRVRLRWTQEETADLMEGCKVHGVGNWKKILTDPRFRFNNRTAVDLKDRFRTCFPEDYRRLYPNARSRKFGKKTNVMAVNDDLVKVNRKERRVFTPEEDERLLNGFMKHGPSWSNIQRDNELGLFERRSTDLRDRFRNAFPLEYAAAGFKARGPKRRPVVEATHGNTLQTIFSASDGSEMSPRKYHRVQEQMDRQPVMRVHPQAPMDQGVDRDHMTQQFTQELQPQAHSRKQQGGDGLKEEVFAAAQNQSYNNYYYQK.

Basic and acidic residues predominate over residues 20-40; it reads EHHNGSHDNDDKDKEDKEKQN. The interval 20 to 46 is disordered; it reads EHHNGSHDNDDKDKEDKEKQNTEAVAA. In terms of domain architecture, HTH myb-type spans 147–206; the sequence is TTRRVRLRWTQEETADLMEGCKVHGVGNWKKILTDPRFRFNNRTAVDLKDRFRTCFPEDY. Positions 175 to 202 form a DNA-binding region, H-T-H motif; sequence WKKILTDPRFRFNNRTAVDLKDRFRTCF. Residues 234–288 enclose the Myb-like domain; sequence VNRKERRVFTPEEDERLLNGFMKHGPSWSNIQRDNELGLFERRSTDLRDRFRNAF. Positions 368-389 are disordered; sequence TQELQPQAHSRKQQGGDGLKEE.

The protein localises to the nucleus. The protein resides in the chromosome. It localises to the telomere. Functionally, telomere-binding protein that mediates telomere clustering by promoting formation of head-to-head dimers of DNA molecules through the telomeric tracts. Binds specifically 5'-TTAGTCAGGG-3' repeats in subtelomeric regions. In Yarrowia lipolytica (strain CLIB 122 / E 150) (Yeast), this protein is telomere-associated protein 1.